A 170-amino-acid polypeptide reads, in one-letter code: Adenine phosphoribosyltransferase (170 aa).

The protein belongs to the purine/pyrimidine phosphoribosyltransferase family. In terms of assembly, homodimer.

The protein localises to the cytoplasm. It catalyses the reaction AMP + diphosphate = 5-phospho-alpha-D-ribose 1-diphosphate + adenine. The protein operates within purine metabolism; AMP biosynthesis via salvage pathway; AMP from adenine: step 1/1. Functionally, catalyzes a salvage reaction resulting in the formation of AMP, that is energically less costly than de novo synthesis. The sequence is that of Adenine phosphoribosyltransferase from Fervidobacterium nodosum (strain ATCC 35602 / DSM 5306 / Rt17-B1).